A 514-amino-acid polypeptide reads, in one-letter code: Flagellin B (514 aa).

Belongs to the bacterial flagellin family. In terms of assembly, heteromer of FlaA and FlaB. FlaB is located proximal to the hook while the remainder of the filament is composed of the predominant FlaA.

The protein localises to the secreted. Its subcellular location is the bacterial flagellum. Its function is as follows. Flagellin is the subunit protein which polymerizes to form the filaments of bacterial flagella. Important for motility and virulence. The sequence is that of Flagellin B (flaB) from Helicobacter pylori (strain J99 / ATCC 700824) (Campylobacter pylori J99).